The following is a 329-amino-acid chain: NADH-quinone oxidoreductase subunit H (329 aa).

9 consecutive transmembrane segments (helical) span residues 9-29, 42-62, 75-95, 117-137, 154-174, 188-208, 238-258, 260-280, and 309-329; these read LIKI…ATYI, GPCY…IKLF, FIFT…MAPI, IGFL…ILAG, IQLL…LMVV, GGFL…FLIA, LKWG…SFVI, IVFF…AILI, and WKIM…IILI.

The protein belongs to the complex I subunit 1 family. As to quaternary structure, NDH-1 is composed of 14 different subunits. Subunits NuoA, H, J, K, L, M, N constitute the membrane sector of the complex.

It localises to the cell inner membrane. The catalysed reaction is a quinone + NADH + 5 H(+)(in) = a quinol + NAD(+) + 4 H(+)(out). In terms of biological role, NDH-1 shuttles electrons from NADH, via FMN and iron-sulfur (Fe-S) centers, to quinones in the respiratory chain. The immediate electron acceptor for the enzyme in this species is believed to be ubiquinone. Couples the redox reaction to proton translocation (for every two electrons transferred, four hydrogen ions are translocated across the cytoplasmic membrane), and thus conserves the redox energy in a proton gradient. This subunit may bind ubiquinone. This chain is NADH-quinone oxidoreductase subunit H, found in Helicobacter pylori (strain G27).